Reading from the N-terminus, the 195-residue chain is Alkyl hydroperoxide reductase C (195 aa).

Residues 4 to 170 (LTIGDQFPEY…VLRVLDALQS (167 aa)) enclose the Thioredoxin domain. Residue Lys-41 forms an Isoglutamyl lysine isopeptide (Lys-Gln) (interchain with Q-Cter in protein Pup) linkage. Residue Cys-61 is the Cysteine sulfenic acid (-SOH) intermediate of the active site.

It belongs to the peroxiredoxin family. AhpC/Prx1 subfamily. In terms of assembly, homodimer; disulfide-linked, upon oxidation. 6 homodimers assemble to form a ring-like dodecamer. Identified in a complex with AhpD, DlaT and Lpd.

The protein localises to the cytoplasm. The catalysed reaction is N(6)-[(R)-dihydrolipoyl]-L-lysyl-[lipoyl-carrier protein] + a hydroperoxide = N(6)-[(R)-lipoyl]-L-lysyl-[lipoyl-carrier protein] + an alcohol + H2O. In terms of biological role, thiol-specific peroxidase that catalyzes the reduction of hydrogen peroxide and organic hydroperoxides to water and alcohols, respectively. Plays a role in cell protection against oxidative stress by detoxifying peroxides. Together with AhpD, DlaT and Lpd, constitutes an NADH-dependent peroxidase active against hydrogen and alkyl peroxides as well as serving as a peroxynitrite reductase, thus protecting the bacterium against reactive nitrogen intermediates and oxidative stress generated by the host immune system. Does not however seem to play a role in detoxification of isoniazid. The chain is Alkyl hydroperoxide reductase C from Mycolicibacterium smegmatis (strain ATCC 700084 / mc(2)155) (Mycobacterium smegmatis).